Consider the following 142-residue polypeptide: Ovocleidin-17 (142 aa).

Disulfide bonds link cysteine 5–cysteine 16, cysteine 33–cysteine 138, and cysteine 113–cysteine 130. Residues threonine 12 to lysine 139 form the C-type lectin domain. Asparagine 59 carries an N-linked (GlcNAc...) asparagine glycan. 2 positions are modified to phosphoserine: serine 61 and serine 67.

In terms of tissue distribution, expressed in the shell gland mucosa. Not detected in hen liver, magnum, isthmus, cartilage, bone or in egg white or yolk.

The protein resides in the secreted. The protein localises to the extracellular space. It localises to the extracellular matrix. In terms of biological role, may form proteinaceous networks during the construction of the eggshell which then may control the deposition of the mineral phase. In Gallus gallus (Chicken), this protein is Ovocleidin-17.